The following is a 543-amino-acid chain: CTP synthase (543 aa).

The amidoligase domain stretch occupies residues 1–265; sequence MTRYVFITGG…DREVLRHFGL (265 aa). A CTP-binding site is contributed by Ser13. Ser13 serves as a coordination point for UTP. ATP is bound at residue 14–19; sequence SLGKGI. An L-glutamine-binding site is contributed by Tyr54. Residue Asp71 participates in ATP binding. Mg(2+) contacts are provided by Asp71 and Glu139. CTP is bound by residues 146–148, 186–191, and Lys222; these read DIE and KTKPTQ. UTP-binding positions include 186 to 191 and Lys222; that span reads KTKPTQ. Val240 is an ATP binding site. In terms of domain architecture, Glutamine amidotransferase type-1 spans 291-542; it reads TIAVVGKYTN…IEAAVKQMRL (252 aa). Position 353 (Gly353) interacts with L-glutamine. Residue Cys380 is the Nucleophile; for glutamine hydrolysis of the active site. L-glutamine contacts are provided by residues 381-384, Glu404, and Arg470; that span reads FGMQ. Residues His515 and Glu517 contribute to the active site.

Belongs to the CTP synthase family. Homotetramer.

The enzyme catalyses UTP + L-glutamine + ATP + H2O = CTP + L-glutamate + ADP + phosphate + 2 H(+). It catalyses the reaction L-glutamine + H2O = L-glutamate + NH4(+). The catalysed reaction is UTP + NH4(+) + ATP = CTP + ADP + phosphate + 2 H(+). It functions in the pathway pyrimidine metabolism; CTP biosynthesis via de novo pathway; CTP from UDP: step 2/2. With respect to regulation, allosterically activated by GTP, when glutamine is the substrate; GTP has no effect on the reaction when ammonia is the substrate. The allosteric effector GTP functions by stabilizing the protein conformation that binds the tetrahedral intermediate(s) formed during glutamine hydrolysis. Inhibited by the product CTP, via allosteric rather than competitive inhibition. Its function is as follows. Catalyzes the ATP-dependent amination of UTP to CTP with either L-glutamine or ammonia as the source of nitrogen. Regulates intracellular CTP levels through interactions with the four ribonucleotide triphosphates. The polypeptide is CTP synthase (Acidiphilium cryptum (strain JF-5)).